The chain runs to 373 residues: Deoxyguanosinetriphosphate triphosphohydrolase-like protein 1 (373 aa).

Positions 21-43 (RSSEARRAVPEAPSETRTAYQKD) are disordered. The region spanning 76–198 (RLTHTLEVQQ…VDAADALAYT (123 aa)) is the HD domain.

This sequence belongs to the dGTPase family. Type 2 subfamily.

In Deinococcus radiodurans (strain ATCC 13939 / DSM 20539 / JCM 16871 / CCUG 27074 / LMG 4051 / NBRC 15346 / NCIMB 9279 / VKM B-1422 / R1), this protein is Deoxyguanosinetriphosphate triphosphohydrolase-like protein 1.